Consider the following 1250-residue polypeptide: Probable autotransporter YfaL (1250 aa).

The first 28 residues, 1 to 28 (MRIIFLRKEYLSLLPSMIASLFSANGVA), serve as a signal peptide directing secretion. The tract at residues 914–951 (RSQEVTPPSPPDPDPTPDPDPTPDPDPTPDPEPTPAYQ) is disordered. Copy 1 of the repeat occupies 919–920 (TP). The segment at 919-948 (TPPSPPDPDPTPDPDPTPDPDPTPDPEPTP) is 15 X 2 AA approximate tandem repeats of [DTPE]-P. One copy of the 2; approximate repeat lies at 921 to 922 (PS). The stretch at 923–924 (PP) is repeat 3. Residues 925 to 926 (DP) form a 4; approximate repeat. Tandem repeats lie at residues 927–928 (DP), 929–930 (TP), 931–932 (DP), 933–934 (DP), 935–936 (TP), 937–938 (DP), 939–940 (DP), 941–942 (TP), 943–944 (DP), 945–946 (EP), and 947–948 (TP). The segment covering 928-942 (PTPDPDPTPDPDPTP) has biased composition (acidic residues). Residues 980-1250 (AGGDGQTLNL…AGFLSMTVKW (271 aa)) form the Autotransporter domain.

An approximately 170 kDa protein is detected in the outer membrane, while a C-terminal 55 kDa fragment is detected in whole cells. The full-length putative autotransporter may be cleaved to release the mature protein from the outer membrane; Pefabloc SC, a Ser-Thr protease inhibitor prevents the appearance of the 55 kDa C--terminal fragment.

It localises to the periplasm. The protein localises to the secreted. It is found in the cell surface. The protein resides in the cell outer membrane. In terms of biological role, probably an autotransporter. Upon overexpression shows increased adherence to polyvinyl chloride (PVC) plates, increased mature biofilm formation. This Escherichia coli (strain K12) protein is Probable autotransporter YfaL (yfaL).